The following is a 350-amino-acid chain: ATP-dependent (S)-NAD(P)H-hydrate dehydratase (350 aa).

One can recognise a YjeF C-terminal domain in the interval 35-342 (LMQSVKRIIP…PEVGRAYEEL (308 aa)). (6S)-NADPHX contacts are provided by residues G139 and 192–198 (NVAEFGR). Residues 230-234 (KGPVD) and 249-258 (GGLKRCGGQG) contribute to the ATP site. D259 provides a ligand contact to (6S)-NADPHX.

It belongs to the NnrD/CARKD family. It depends on Mg(2+) as a cofactor.

Its subcellular location is the cytoplasm. It catalyses the reaction (6S)-NADHX + ATP = ADP + phosphate + NADH + H(+). It carries out the reaction (6S)-NADPHX + ATP = ADP + phosphate + NADPH + H(+). Functionally, catalyzes the dehydration of the S-form of NAD(P)HX at the expense of ATP, which is converted to ADP. Together with NAD(P)HX epimerase, which catalyzes the epimerization of the S- and R-forms, the enzyme allows the repair of both epimers of NAD(P)HX, a damaged form of NAD(P)H that is a result of enzymatic or heat-dependent hydration. The polypeptide is ATP-dependent (S)-NAD(P)H-hydrate dehydratase (Mycosarcoma maydis (Corn smut fungus)).